Here is a 786-residue protein sequence, read N- to C-terminus: Polyribonucleotide nucleotidyltransferase (786 aa).

The Mg(2+) site is built by D516 and D522. Residues P582–V641 enclose the KH domain. In terms of domain architecture, S1 motif spans G653–V722. A disordered region spans residues V722–S786. Positions A727 to R738 are enriched in low complexity. A compositionally biased stretch (basic and acidic residues) spans P739–R778.

Belongs to the polyribonucleotide nucleotidyltransferase family. Requires Mg(2+) as cofactor.

It localises to the cytoplasm. The enzyme catalyses RNA(n+1) + phosphate = RNA(n) + a ribonucleoside 5'-diphosphate. Involved in mRNA degradation. Catalyzes the phosphorolysis of single-stranded polyribonucleotides processively in the 3'- to 5'-direction. This is Polyribonucleotide nucleotidyltransferase from Salinispora arenicola (strain CNS-205).